Reading from the N-terminus, the 219-residue chain is uncharacterized protein (219 aa).

The signal sequence occupies residues Met-1–Gly-22. Cys-23 carries the N-palmitoyl cysteine lipid modification. Cys-23 is lipidated: S-diacylglycerol cysteine. Residues Ser-26 to Asn-89 form a disordered region. Residues Gln-32–Gln-42 are compositionally biased toward polar residues. Positions Thr-43–Ala-61 are enriched in basic and acidic residues.

It is found in the cell membrane. This is an uncharacterized protein from Bacillus subtilis (strain 168).